Reading from the N-terminus, the 117-residue chain is Large ribosomal subunit protein bL20 (117 aa).

The protein belongs to the bacterial ribosomal protein bL20 family.

In terms of biological role, binds directly to 23S ribosomal RNA and is necessary for the in vitro assembly process of the 50S ribosomal subunit. It is not involved in the protein synthesizing functions of that subunit. This Citrifermentans bemidjiense (strain ATCC BAA-1014 / DSM 16622 / JCM 12645 / Bem) (Geobacter bemidjiensis) protein is Large ribosomal subunit protein bL20.